We begin with the raw amino-acid sequence, 66 residues long: Large ribosomal subunit protein uL29 (66 aa).

The protein belongs to the universal ribosomal protein uL29 family.

The polypeptide is Large ribosomal subunit protein uL29 (Bacillus licheniformis (strain ATCC 14580 / DSM 13 / JCM 2505 / CCUG 7422 / NBRC 12200 / NCIMB 9375 / NCTC 10341 / NRRL NRS-1264 / Gibson 46)).